We begin with the raw amino-acid sequence, 194 residues long: Protein LKAAEAR1 (194 aa).

The disordered stretch occupies residues 1–45 (MPPPAKEGGRKGPRERSGKSAPGTAQGEERAKGAPATEPPKPGWA). Over residues 7 to 18 (EGGRKGPRERSG) the composition is skewed to basic and acidic residues.

This Homo sapiens (Human) protein is Protein LKAAEAR1 (LKAAEAR1).